The following is a 386-amino-acid chain: Succinate--CoA ligase [ADP-forming] subunit beta (386 aa).

Residues 9–244 (KDLLASYDVP…PSQENVRDVL (236 aa)) enclose the ATP-grasp domain. Residues Lys-46, 53–55 (GRG), Val-102, and Glu-107 each bind ATP. Asn-199 and Asp-213 together coordinate Mg(2+). Substrate contacts are provided by residues Asn-264 and 321–323 (GIM).

This sequence belongs to the succinate/malate CoA ligase beta subunit family. As to quaternary structure, heterotetramer of two alpha and two beta subunits. Requires Mg(2+) as cofactor.

It carries out the reaction succinate + ATP + CoA = succinyl-CoA + ADP + phosphate. It catalyses the reaction GTP + succinate + CoA = succinyl-CoA + GDP + phosphate. Its pathway is carbohydrate metabolism; tricarboxylic acid cycle; succinate from succinyl-CoA (ligase route): step 1/1. Functionally, succinyl-CoA synthetase functions in the citric acid cycle (TCA), coupling the hydrolysis of succinyl-CoA to the synthesis of either ATP or GTP and thus represents the only step of substrate-level phosphorylation in the TCA. The beta subunit provides nucleotide specificity of the enzyme and binds the substrate succinate, while the binding sites for coenzyme A and phosphate are found in the alpha subunit. In Chlamydia pneumoniae (Chlamydophila pneumoniae), this protein is Succinate--CoA ligase [ADP-forming] subunit beta.